The primary structure comprises 66 residues: Large ribosomal subunit protein bL35 (66 aa).

It belongs to the bacterial ribosomal protein bL35 family.

The sequence is that of Large ribosomal subunit protein bL35 from Wigglesworthia glossinidia brevipalpis.